The sequence spans 163 residues: Probable ribosome biogenesis protein RLP24 (163 aa).

It belongs to the eukaryotic ribosomal protein eL24 family. Associated with nucleolar and cytoplasmic pre-60S particles. At the end of biogenesis it dissociates from cytoplasmic pre-60S particles and is likely to be exchanged for its ribosomal homolog, RPL24.

The protein localises to the nucleus. It localises to the nucleolus. Its function is as follows. Involved in the biogenesis of the 60S ribosomal subunit. Ensures the docking of GTPBP4/NOG1 to pre-60S particles. The polypeptide is Probable ribosome biogenesis protein RLP24 (RSL24D1) (Bos taurus (Bovine)).